Here is a 189-residue protein sequence, read N- to C-terminus: Protein GrpE (189 aa).

Residues 1 to 22 form a disordered region; sequence MKEQQKETEQNIEEINDETVTE. The segment covering 10 to 22 has biased composition (acidic residues); sequence QNIEEINDETVTE.

This sequence belongs to the GrpE family. As to quaternary structure, homodimer.

Its subcellular location is the cytoplasm. Its function is as follows. Participates actively in the response to hyperosmotic and heat shock by preventing the aggregation of stress-denatured proteins, in association with DnaK and GrpE. It is the nucleotide exchange factor for DnaK and may function as a thermosensor. Unfolded proteins bind initially to DnaJ; upon interaction with the DnaJ-bound protein, DnaK hydrolyzes its bound ATP, resulting in the formation of a stable complex. GrpE releases ADP from DnaK; ATP binding to DnaK triggers the release of the substrate protein, thus completing the reaction cycle. Several rounds of ATP-dependent interactions between DnaJ, DnaK and GrpE are required for fully efficient folding. This chain is Protein GrpE, found in Leuconostoc citreum (strain KM20).